Here is a 235-residue protein sequence, read N- to C-terminus: UPF0714 protein YmaC (235 aa).

A helical transmembrane segment spans residues 5-24 (LLNVILVLAIVLFLRYVHYS).

Belongs to the UPF0714 family.

It is found in the cell membrane. The polypeptide is UPF0714 protein YmaC (ymaC) (Bacillus subtilis (strain 168)).